The primary structure comprises 263 residues: Hydroxyacylglutathione hydrolase (263 aa).

The Zn(2+) site is built by H55, H57, D59, H60, H117, D134, and H172.

It belongs to the metallo-beta-lactamase superfamily. Glyoxalase II family. In terms of assembly, monomer. Requires Zn(2+) as cofactor.

The catalysed reaction is an S-(2-hydroxyacyl)glutathione + H2O = a 2-hydroxy carboxylate + glutathione + H(+). The protein operates within secondary metabolite metabolism; methylglyoxal degradation; (R)-lactate from methylglyoxal: step 2/2. In terms of biological role, thiolesterase that catalyzes the hydrolysis of S-D-lactoyl-glutathione to form glutathione and D-lactic acid. The chain is Hydroxyacylglutathione hydrolase from Shewanella baltica (strain OS155 / ATCC BAA-1091).